The primary structure comprises 206 residues: Fibroblast growth factor 4 (206 aa).

An N-terminal signal peptide occupies residues 1–29 (MAGPGTAAAALLPAVLLAVLAPWAGRGGA).

The protein belongs to the heparin-binding growth factors family. In terms of assembly, interacts with FGFR1, FGFR2, FGFR3 and FGFR4. Affinity between fibroblast growth factors (FGFs) and their receptors is increased by heparan sulfate glycosaminoglycans that function as coreceptors.

The protein resides in the secreted. Plays an important role in the regulation of embryonic development, cell proliferation, and cell differentiation. Required for normal limb and cardiac valve development during embryogenesis. May play a role in embryonic molar tooth bud development via inducing the expression of MSX1, MSX2 and MSX1-mediated expression of SDC1 in dental mesenchyme cells. The protein is Fibroblast growth factor 4 of Bos taurus (Bovine).